The primary structure comprises 84 residues: MPRHESAKKRMRQNEKRQKRNKSQKSRVRTKIKTLRSLDDKEEAEELLNDVKGDLDRLAAKGIIHENKAANRKSKLEKHVDALE.

The segment at 1-32 (MPRHESAKKRMRQNEKRQKRNKSQKSRVRTKI) is disordered.

The protein belongs to the bacterial ribosomal protein bS20 family.

Functionally, binds directly to 16S ribosomal RNA. The chain is Small ribosomal subunit protein bS20 from Salinibacter ruber (strain DSM 13855 / M31).